The primary structure comprises 239 residues: MKDRIFKQDIGKQFEFDAQVASVFDDMLERSIPHYKEVLGLIVDFCSYTLESSKSAIPLVYDLGSSTGTTLLALSQALSTHTRFIGIDSSQAMIDKASLKAQAYNANIEFICTDLLEYDFLHSDIVIANYSLQFIRPMQRPALLQKIYNALTEGGILIVSEKMTSHHRILDRQMIERYVRYKQEQGYTKTEISKKREALENVLVPFSLEENIAMLKDIGFSGIEVLFKWVNFGTLIAKK.

S-adenosyl-L-methionine-binding positions include Y35, 64-66 (GSS), 114-115 (DL), N129, and R196.

This sequence belongs to the class I-like SAM-binding methyltransferase superfamily. Cx-SAM synthase family. Homodimer.

It catalyses the reaction prephenate + S-adenosyl-L-methionine = carboxy-S-adenosyl-L-methionine + 3-phenylpyruvate + H2O. In terms of biological role, catalyzes the conversion of S-adenosyl-L-methionine (SAM) to carboxy-S-adenosyl-L-methionine (Cx-SAM). This chain is Carboxy-S-adenosyl-L-methionine synthase, found in Helicobacter hepaticus (strain ATCC 51449 / 3B1).